A 449-amino-acid polypeptide reads, in one-letter code: uncharacterized protein (449 aa).

Positions 3–61 constitute a TRAM domain; sequence VWQQGATIELRIDSLSHTGEGVGRWQDRVVFVADTVPGDRLRVRLTHVKRQYAHGKVLE. [4Fe-4S] cluster-binding residues include Cys74, Cys80, Cys83, and Cys161. Residues Gln283, Tyr312, Glu333, and Asp378 each contribute to the S-adenosyl-L-methionine site. Cys405 (nucleophile) is an active-site residue.

Belongs to the class I-like SAM-binding methyltransferase superfamily. RNA M5U methyltransferase family.

This is an uncharacterized protein from Thermosynechococcus vestitus (strain NIES-2133 / IAM M-273 / BP-1).